We begin with the raw amino-acid sequence, 344 residues long: Dihydroorotase (344 aa).

Positions 14 and 16 each coordinate Zn(2+). Substrate is bound by residues 16 to 18 (HLR) and asparagine 42. Lysine 100, histidine 137, and histidine 175 together coordinate Zn(2+). Lysine 100 carries the post-translational modification N6-carboxylysine. Histidine 137 contributes to the substrate binding site. Leucine 220 serves as a coordination point for substrate. Aspartate 248 provides a ligand contact to Zn(2+). Residue aspartate 248 is part of the active site. 2 residues coordinate substrate: histidine 252 and alanine 264.

It belongs to the metallo-dependent hydrolases superfamily. DHOase family. Class II DHOase subfamily. Homodimer. The cofactor is Zn(2+).

The enzyme catalyses (S)-dihydroorotate + H2O = N-carbamoyl-L-aspartate + H(+). The protein operates within pyrimidine metabolism; UMP biosynthesis via de novo pathway; (S)-dihydroorotate from bicarbonate: step 3/3. In terms of biological role, catalyzes the reversible cyclization of carbamoyl aspartate to dihydroorotate. The protein is Dihydroorotase of Cupriavidus taiwanensis (strain DSM 17343 / BCRC 17206 / CCUG 44338 / CIP 107171 / LMG 19424 / R1) (Ralstonia taiwanensis (strain LMG 19424)).